Reading from the N-terminus, the 270-residue chain is MNDKTHLGHTARKRFGQNFLHDDYIIDSIVGAIAPQWEDNIVEIGPGLGALTEPVASKVKCLNVIELDRDLAARLAEHPVLGDKLNITQADALQFDFGKLASTERPLRVFGNLPYNISTPLMFHLFEYADKISDMHFMLQKEVVNRLCAGPNCKAYGRLTVMAQYYCRIIPVLEVPPTAFKPAPKVDSAVVRLEPYDTPPFIAKSLKCLTQVCSMAFNQRRKTIRNGLRDLLSIEQLQEIGIDTTKRAENISVEEYVNIANYVFDLKENK.

S-adenosyl-L-methionine contacts are provided by N18, L20, G45, E66, D91, and N112.

It belongs to the class I-like SAM-binding methyltransferase superfamily. rRNA adenine N(6)-methyltransferase family. RsmA subfamily.

The protein localises to the cytoplasm. It catalyses the reaction adenosine(1518)/adenosine(1519) in 16S rRNA + 4 S-adenosyl-L-methionine = N(6)-dimethyladenosine(1518)/N(6)-dimethyladenosine(1519) in 16S rRNA + 4 S-adenosyl-L-homocysteine + 4 H(+). Functionally, specifically dimethylates two adjacent adenosines (A1518 and A1519) in the loop of a conserved hairpin near the 3'-end of 16S rRNA in the 30S particle. May play a critical role in biogenesis of 30S subunits. The protein is Ribosomal RNA small subunit methyltransferase A of Psychromonas ingrahamii (strain DSM 17664 / CCUG 51855 / 37).